Reading from the N-terminus, the 405-residue chain is NADH-quinone oxidoreductase subunit D (405 aa).

Belongs to the complex I 49 kDa subunit family. As to quaternary structure, NDH-1 is composed of 14 different subunits. Subunits NuoB, C, D, E, F, and G constitute the peripheral sector of the complex.

It is found in the cell inner membrane. It catalyses the reaction a quinone + NADH + 5 H(+)(in) = a quinol + NAD(+) + 4 H(+)(out). Its function is as follows. NDH-1 shuttles electrons from NADH, via FMN and iron-sulfur (Fe-S) centers, to quinones in the respiratory chain. The immediate electron acceptor for the enzyme in this species is believed to be ubiquinone. Couples the redox reaction to proton translocation (for every two electrons transferred, four hydrogen ions are translocated across the cytoplasmic membrane), and thus conserves the redox energy in a proton gradient. In Afipia carboxidovorans (strain ATCC 49405 / DSM 1227 / KCTC 32145 / OM5) (Oligotropha carboxidovorans), this protein is NADH-quinone oxidoreductase subunit D.